A 390-amino-acid polypeptide reads, in one-letter code: MRKMLAAVSRVLAGAAQKPASRVLVASRNFANDATFEIKKCDLHRLEEGPPVTTVLTREDGLKYYRMMQTVRRMELKADQLYKQKIIRGFCHLCDGQEACCVGLEAGINPTDHLITAYRAHGFTFNRGHAVRAILAELTGRRGGCAKGKGGSMHMYAKNFYGGNGIVGAQVPLGAGIALACKYNGKDEVCLTLYGDGAANQGQIFEAYNMAALWKLPCIFICENNRYGMGTSVERAAASTDYYKRGDFIPGLRVDGMDILCVREATKFAAAYCRSGKGPILMELQTYRYHGHSMSDPGVSYRTREEIQEVRSKSDPIMLLKDRMVNSNLASVEELKEIDVEVRKEIEDAAQFATADPEPPLEELGYHIYSSDPPFEVRGANQWIKFKSVS.

The transit peptide at 1–29 (MRKMLAAVSRVLAGAAQKPASRVLVASRN) directs the protein to the mitochondrion. Lys63 is modified (N6-acetyllysine; alternate). Lys63 carries the post-translational modification N6-succinyllysine; alternate. Residues His92, Tyr118, Arg119, Ala157, Gly165, Val167, Asp196, Gly197, Ala198, Asn225, and Tyr227 each coordinate pyruvate. Thiamine diphosphate-binding residues include Tyr118 and Arg119. The thiamine diphosphate site is built by Gly165, Val167, Asp196, Gly197, Ala198, and Asn225. Asp196 provides a ligand contact to Mg(2+). Residues Asn225 and Tyr227 each coordinate Mg(2+). At Ser232 the chain carries Phosphoserine; by PDK1. Lys244 bears the N6-acetyllysine; alternate mark. An N6-succinyllysine; alternate modification is found at Lys244. N6-acetyllysine is present on Lys267. An N6-succinyllysine modification is found at Lys277. His292 is a thiamine diphosphate binding site. The residue at position 293 (Ser293) is a Phosphoserine; by PDK1, PDK2, PDK3 and PDK4. Ser295 is modified (phosphoserine). Ser300 bears the Phosphoserine; by PDK1, PDK2, PDK3 and PDK4 mark. Residue Tyr301 is modified to Phosphotyrosine. Lys313 carries the post-translational modification N6-acetyllysine; alternate. An N6-succinyllysine; alternate modification is found at Lys313. An N6-acetyllysine mark is found at Lys321 and Lys336. Residue Lys385 is modified to N6-succinyllysine.

Heterotetramer of two PDHA1 and two PDHB subunits. The heterotetramer interacts with DLAT, and is part of the multimeric pyruvate dehydrogenase complex that contains multiple copies of pyruvate dehydrogenase (E1), dihydrolipoamide acetyltransferase (DLAT, E2) and lipoamide dehydrogenase (DLD, E3). These subunits are bound to an inner core composed of about 48 DLAT and 12 PDHX molecules. The cofactor is thiamine diphosphate. It depends on Mg(2+) as a cofactor. Post-translationally, phosphorylation at Ser-232, Ser-293 and Ser-300 by PDK family kinases inactivates the enzyme; for this phosphorylation at a single site is sufficient. Phosphorylation at Ser-293 interferes with access to active site, and thereby inactivates the enzyme. Dephosphorylation at all three sites, i.e. at Ser-232, Ser-293 and Ser-300, is required for reactivation. Acetylation alters the phosphorylation pattern. Deacetylated by SIRT3. As to expression, in all tissues, but in very low amount in testis.

It localises to the mitochondrion matrix. It catalyses the reaction N(6)-[(R)-lipoyl]-L-lysyl-[protein] + pyruvate + H(+) = N(6)-[(R)-S(8)-acetyldihydrolipoyl]-L-lysyl-[protein] + CO2. With respect to regulation, pyruvate dehydrogenase activity is inhibited by phosphorylation of PDHA1; it is reactivated by dephosphorylation. In terms of biological role, the pyruvate dehydrogenase complex catalyzes the overall conversion of pyruvate to acetyl-CoA and CO(2), and thereby links the glycolytic pathway to the tricarboxylic cycle. This Rattus norvegicus (Rat) protein is Pyruvate dehydrogenase E1 component subunit alpha, somatic form, mitochondrial (Pdha1).